Reading from the N-terminus, the 176-residue chain is O-acetyl-ADP-ribose deacetylase (176 aa).

The region spanning 1–175 is the Macro domain; sequence MSGRINVVQG…LYQRLLGQYD (175 aa). Substrate is bound by residues 11-12, Asn25, 33-35, and 122-126; these read DI, GVD, and STGIY. Asp35 acts as the Proton acceptor in catalysis.

Belongs to the MacroD-type family. YmdB subfamily. In terms of assembly, homodimer. Interacts with RNase III.

It carries out the reaction 3''-O-acetyl-ADP-D-ribose + H2O = ADP-D-ribose + acetate + H(+). It catalyses the reaction 2''-O-acetyl-ADP-D-ribose + H2O = ADP-D-ribose + acetate + H(+). Deacetylates O-acetyl-ADP ribose to yield ADP-ribose and free acetate. Down-regulates ribonuclease 3 (RNase III) activity. Acts by interacting directly with the region of the ribonuclease that is required for dimerization/activation. This chain is O-acetyl-ADP-ribose deacetylase, found in Cronobacter turicensis (strain DSM 18703 / CCUG 55852 / LMG 23827 / z3032).